We begin with the raw amino-acid sequence, 458 residues long: F-box/LRR-repeat protein At5g02910 (458 aa).

An F-box domain is found at 10–56 (MDFISSLPDEILHHILSSVPTKSAIRTSLLSKRWRYVWSETPSLSID). LRR repeat units follow at residues 57 to 84 (CRRA…HLHT), 86 to 112 (LLNR…SLES), 133 to 161 (KQLF…LSLS), 162 to 187 (NCTL…ELLY), 226 to 251 (CLRL…DLNI), 260 to 285 (TAGF…TIGG), 325 to 353 (KLLR…HLND), and 389 to 414 (ESNL…VVLL).

The protein is F-box/LRR-repeat protein At5g02910 of Arabidopsis thaliana (Mouse-ear cress).